Reading from the N-terminus, the 429-residue chain is Glutamate-1-semialdehyde 2,1-aminomutase (429 aa).

N6-(pyridoxal phosphate)lysine is present on Lys-270.

It belongs to the class-III pyridoxal-phosphate-dependent aminotransferase family. HemL subfamily. Homodimer. Requires pyridoxal 5'-phosphate as cofactor.

It is found in the cytoplasm. The catalysed reaction is (S)-4-amino-5-oxopentanoate = 5-aminolevulinate. Its pathway is porphyrin-containing compound metabolism; protoporphyrin-IX biosynthesis; 5-aminolevulinate from L-glutamyl-tRNA(Glu): step 2/2. This is Glutamate-1-semialdehyde 2,1-aminomutase from Cupriavidus pinatubonensis (strain JMP 134 / LMG 1197) (Cupriavidus necator (strain JMP 134)).